Consider the following 345-residue polypeptide: UDP-N-acetylenolpyruvoylglucosamine reductase (345 aa).

The region spanning 16 to 186 (LSVSASCIKV…TAVGIFLKKE (171 aa)) is the FAD-binding PCMH-type domain. Arg-162 is a catalytic residue. Ser-232 (proton donor) is an active-site residue. Residue Glu-328 is part of the active site.

The protein belongs to the MurB family. It depends on FAD as a cofactor.

It is found in the cytoplasm. The catalysed reaction is UDP-N-acetyl-alpha-D-muramate + NADP(+) = UDP-N-acetyl-3-O-(1-carboxyvinyl)-alpha-D-glucosamine + NADPH + H(+). The protein operates within cell wall biogenesis; peptidoglycan biosynthesis. Its function is as follows. Cell wall formation. In Pectobacterium atrosepticum (strain SCRI 1043 / ATCC BAA-672) (Erwinia carotovora subsp. atroseptica), this protein is UDP-N-acetylenolpyruvoylglucosamine reductase.